A 65-amino-acid polypeptide reads, in one-letter code: Large ribosomal subunit protein bL35 (65 aa).

It belongs to the bacterial ribosomal protein bL35 family.

In Thermotoga petrophila (strain ATCC BAA-488 / DSM 13995 / JCM 10881 / RKU-1), this protein is Large ribosomal subunit protein bL35.